The primary structure comprises 404 residues: MAERFDRIWHNARLATLREGQPGLGVIEQGVVAARDGRIAFAGPRSDFAADGDAPERIDCAGRWITPGLVDCHTHLVYGGDRAHEFELRLAGASYEEIARAGGGIVSTVAATRAADENELVTGALPRLDALLAEGVTTIEIKSGYGLETATELRQLSAARALGVRRAVSVRTSFLGAHALPVEADGDKERYIDRVCDEMLPAVAQSGLADAVDAFMENIAFSAAQTSRVFAAAKALGLPVKLHADQLSNLGGAALAAEFGALSADHLEHTDEAGAAAMARAETVAVLLPGAFYFIRETQKPPVELFRKHGVKLALATDCNPGSSPLTSLLLTMNMAATLFRMTVDECLAGVTREGARALGVLAETGTLDAGKWCDLAIWDINRPAELVYRMGFNPLHQRVWRGR.

Fe(3+) is bound by residues H73 and H75. H73 and H75 together coordinate Zn(2+). R82, Y145, and H178 together coordinate 4-imidazolone-5-propanoate. Residue Y145 participates in N-formimidoyl-L-glutamate binding. H243 serves as a coordination point for Fe(3+). H243 is a binding site for Zn(2+). 4-imidazolone-5-propanoate is bound at residue Q246. Residue D318 coordinates Fe(3+). Position 318 (D318) interacts with Zn(2+). N-formimidoyl-L-glutamate is bound by residues N320 and G322. S323 provides a ligand contact to 4-imidazolone-5-propanoate.

Belongs to the metallo-dependent hydrolases superfamily. HutI family. It depends on Zn(2+) as a cofactor. Requires Fe(3+) as cofactor.

It localises to the cytoplasm. It carries out the reaction 4-imidazolone-5-propanoate + H2O = N-formimidoyl-L-glutamate. It functions in the pathway amino-acid degradation; L-histidine degradation into L-glutamate; N-formimidoyl-L-glutamate from L-histidine: step 3/3. Its function is as follows. Catalyzes the hydrolytic cleavage of the carbon-nitrogen bond in imidazolone-5-propanoate to yield N-formimidoyl-L-glutamate. It is the third step in the universal histidine degradation pathway. The protein is Imidazolonepropionase of Bradyrhizobium sp. (strain BTAi1 / ATCC BAA-1182).